The sequence spans 193 residues: MNFLAHLHLAHLAESSLSGNLLADFVRGNPEESFPPDVVAGIHMHRRIDVLTDNLPEVREAREWFRNETRRVAPITLDVMWDHFLSRHWSQLSPDFPLQEFTCYAREQVMTILPDSPPRFINLNNYLWSERWLVRYRDMDFIQSVLNGMASRRPRLDALRDSWYDLDAHYDALETRFWQFYPRMMEQASRKAL.

It belongs to the AcpH family.

The catalysed reaction is holo-[ACP] + H2O = apo-[ACP] + (R)-4'-phosphopantetheine + H(+). Functionally, converts holo-ACP to apo-ACP by hydrolytic cleavage of the phosphopantetheine prosthetic group from ACP. The chain is Acyl carrier protein phosphodiesterase from Escherichia coli O6:K15:H31 (strain 536 / UPEC).